Reading from the N-terminus, the 536-residue chain is Protein GvpD1 (536 aa).

ATP is bound at residue 39–46; that stretch reads GAPGTGKT. The tract at residues 352–413 is disordered; it reads GPSDSADRYD…SDQPHPIDED (62 aa). A compositionally biased stretch (polar residues) spans 363–372; the sequence is PDSTESFSEM. Residues 373–385 show a composition bias toward low complexity; the sequence is ATTTPPDDAPTAT. Over residues 386 to 396 the composition is skewed to basic and acidic residues; that stretch reads HETDGADDGSR.

Belongs to the gas vesicle GvpD family. As to quaternary structure, interacts with GvpE.

The protein localises to the cytoplasm. Functionally, causes a decrease in the amount of GvpE protein. The 5'-region of its promoter or mRNA has a repressive function on downstream genes. Gas vesicles are hollow, gas filled proteinaceous nanostructures found in several microbial planktonic microorganisms. They allow positioning of halobacteria at the optimal depth for growth in the poorly aerated, shallow brine pools of their habitat. In terms of biological role, expression of a 9.5 kb p-vac DNA fragment containing 2 divergently transcribed regions (gvpD-gvpE-gvpF-gvpG-gvpH-gvpI-gvpJ-gvpK-gvpL-gvpM and gvpA-gvpC-gvpN-gvpO) allows H.volcanii to produce gas vesicles. A similar region restores gas vesicle production in H.halobium without the p-vac locus, but it still has the c-vac locus. This Halobacterium salinarum (strain ATCC 700922 / JCM 11081 / NRC-1) (Halobacterium halobium) protein is Protein GvpD1 (gvpD11).